The primary structure comprises 630 residues: Ribonucleoside-diphosphate reductase large subunit (630 aa).

Residues Ser67, 82–83 (AC), Gly111, 317–321 (NLCSE), and 459–463 (PNATS) contribute to the substrate site. Cys83 and Cys334 form a disulfide bridge. Asn317 functions as the Proton acceptor in the catalytic mechanism. Cys319 serves as the catalytic Cysteine radical intermediate. Glu321 (proton acceptor) is an active-site residue.

It belongs to the ribonucleoside diphosphate reductase large chain family. As to quaternary structure, heterotetramer composed of a homodimer of the large subunit (R1) and a homodimer of the small subunit (R2). Larger multisubunit protein complex are also active, composed of (R1)n(R2)n.

The enzyme catalyses a 2'-deoxyribonucleoside 5'-diphosphate + [thioredoxin]-disulfide + H2O = a ribonucleoside 5'-diphosphate + [thioredoxin]-dithiol. Under complex allosteric control mediated by deoxynucleoside triphosphates and ATP binding. The type of nucleotide bound at the specificity site determines substrate preference. It seems probable that ATP makes the enzyme reduce CDP and UDP, dGTP favors ADP reduction and dTTP favors GDP reduction. Ribonucleoside-diphosphate reductase holoenzyme provides the precursors necessary for viral DNA synthesis. Allows virus growth in non-dividing cells. Catalyzes the biosynthesis of deoxyribonucleotides from the corresponding ribonucleotides. The protein is Ribonucleoside-diphosphate reductase large subunit of Aedes vexans (Inland floodwater mosquito).